A 112-amino-acid chain; its full sequence is UPF0060 membrane protein AAur_4166 (112 aa).

The next 4 membrane-spanning stretches (helical) occupy residues 8–28 (ILFV…WQAV), 33–53 (AWWW…FAAF), 62–82 (VLAA…MLMD), and 91–111 (VIGA…PRPG).

Belongs to the UPF0060 family.

It localises to the cell membrane. This is UPF0060 membrane protein AAur_4166 from Paenarthrobacter aurescens (strain TC1).